The sequence spans 108 residues: Complement inhibitor CirpT4 (108 aa).

The N-terminal stretch at 1–19 is a signal peptide; the sequence is MRAFVALFCTLVAFATVIC. 4 disulfide bridges follow: C40-C64, C59-C98, C76-C99, and C85-C104.

This sequence belongs to the CirpT family. Expressed in salivary glands.

It is found in the secreted. Functionally, complement inhibitor. Prevents complement-mediated activation of C5 by sterically preventing direct binding of C5 to its convertase (binding with domains MG4 and MG5). Binds C5 at a different binding site than the other tick complement inhibitors OmCI and RaCI3, and the drug eculizumab. Inhibits the complement in human, rat and guinea pig, and also shows a reduced inhibition in rabbit and pig. The protein is Complement inhibitor CirpT4 of Amblyomma americanum (Lone star tick).